Reading from the N-terminus, the 95-residue chain is Pyrimidine/purine nucleoside phosphorylase (95 aa).

Belongs to the nucleoside phosphorylase PpnP family.

It catalyses the reaction a purine D-ribonucleoside + phosphate = a purine nucleobase + alpha-D-ribose 1-phosphate. The enzyme catalyses adenosine + phosphate = alpha-D-ribose 1-phosphate + adenine. The catalysed reaction is cytidine + phosphate = cytosine + alpha-D-ribose 1-phosphate. It carries out the reaction guanosine + phosphate = alpha-D-ribose 1-phosphate + guanine. It catalyses the reaction inosine + phosphate = alpha-D-ribose 1-phosphate + hypoxanthine. The enzyme catalyses thymidine + phosphate = 2-deoxy-alpha-D-ribose 1-phosphate + thymine. The catalysed reaction is uridine + phosphate = alpha-D-ribose 1-phosphate + uracil. It carries out the reaction xanthosine + phosphate = alpha-D-ribose 1-phosphate + xanthine. Catalyzes the phosphorolysis of diverse nucleosides, yielding D-ribose 1-phosphate and the respective free bases. Can use uridine, adenosine, guanosine, cytidine, thymidine, inosine and xanthosine as substrates. Also catalyzes the reverse reactions. The sequence is that of Pyrimidine/purine nucleoside phosphorylase from Edwardsiella ictaluri (strain 93-146).